We begin with the raw amino-acid sequence, 262 residues long: Small ribosomal subunit protein eS4B (262 aa).

Residues 42-105 enclose the S4 RNA-binding domain; that stretch reads LPLIVFLRNR…GEHFRLVYDI (64 aa). At S223 the chain carries Phosphoserine.

Belongs to the eukaryotic ribosomal protein eS4 family. In terms of assembly, component of the small ribosomal subunit (SSU). Mature yeast ribosomes consist of a small (40S) and a large (60S) subunit. The 40S small subunit contains 1 molecule of ribosomal RNA (18S rRNA) and at least 33 different proteins. The large 60S subunit contains 3 rRNA molecules (25S, 5.8S and 5S rRNA) and at least 46 different proteins.

It localises to the cytoplasm. It is found in the nucleus. The protein resides in the nucleolus. Component of the ribosome, a large ribonucleoprotein complex responsible for the synthesis of proteins in the cell. The small ribosomal subunit (SSU) binds messenger RNAs (mRNAs) and translates the encoded message by selecting cognate aminoacyl-transfer RNA (tRNA) molecules. The large subunit (LSU) contains the ribosomal catalytic site termed the peptidyl transferase center (PTC), which catalyzes the formation of peptide bonds, thereby polymerizing the amino acids delivered by tRNAs into a polypeptide chain. The nascent polypeptides leave the ribosome through a tunnel in the LSU and interact with protein factors that function in enzymatic processing, targeting, and the membrane insertion of nascent chains at the exit of the ribosomal tunnel. This is Small ribosomal subunit protein eS4B (rps402) from Schizosaccharomyces pombe (strain 972 / ATCC 24843) (Fission yeast).